Consider the following 647-residue polypeptide: Threonine--tRNA ligase (647 aa).

In terms of domain architecture, TGS spans 1–61; sequence MINITFPDGA…TEDGSIEIVT (61 aa). The segment at 242 to 540 is catalytic; sequence DHRKLGKELD…LIENYKGAFP (299 aa). Zn(2+) is bound by residues C336, H387, and H517.

The protein belongs to the class-II aminoacyl-tRNA synthetase family. As to quaternary structure, homodimer. The cofactor is Zn(2+).

The protein resides in the cytoplasm. The enzyme catalyses tRNA(Thr) + L-threonine + ATP = L-threonyl-tRNA(Thr) + AMP + diphosphate + H(+). Its function is as follows. Catalyzes the attachment of threonine to tRNA(Thr) in a two-step reaction: L-threonine is first activated by ATP to form Thr-AMP and then transferred to the acceptor end of tRNA(Thr). Also edits incorrectly charged L-seryl-tRNA(Thr). This chain is Threonine--tRNA ligase, found in Streptococcus pneumoniae (strain JJA).